Reading from the N-terminus, the 466-residue chain is Cysteine--tRNA ligase (466 aa).

Cysteine 33 serves as a coordination point for Zn(2+). The 'HIGH' region signature appears at 35–45 (PTVYDYAHIGN). Cysteine 221, histidine 246, and glutamate 250 together coordinate Zn(2+). Residues 279–283 (KMSKS) carry the 'KMSKS' region motif. Lysine 282 is a binding site for ATP.

Belongs to the class-I aminoacyl-tRNA synthetase family. Monomer. It depends on Zn(2+) as a cofactor.

Its subcellular location is the cytoplasm. It catalyses the reaction tRNA(Cys) + L-cysteine + ATP = L-cysteinyl-tRNA(Cys) + AMP + diphosphate. This Rhizobium meliloti (strain 1021) (Ensifer meliloti) protein is Cysteine--tRNA ligase.